The primary structure comprises 510 residues: NAD(P)H-quinone oxidoreductase subunit 2 A, chloroplastic (510 aa).

The next 12 helical transmembrane spans lie at F31–T51, W59–W79, I99–I119, M124–C144, L149–Y169, Y183–G203, I229–F249, W295–I315, M323–D343, Y354–L374, A395–F415, and L418–L438.

It belongs to the complex I subunit 2 family. As to quaternary structure, NDH is composed of at least 16 different subunits, 5 of which are encoded in the nucleus.

The protein localises to the plastid. The protein resides in the chloroplast thylakoid membrane. The enzyme catalyses a plastoquinone + NADH + (n+1) H(+)(in) = a plastoquinol + NAD(+) + n H(+)(out). It carries out the reaction a plastoquinone + NADPH + (n+1) H(+)(in) = a plastoquinol + NADP(+) + n H(+)(out). Functionally, NDH shuttles electrons from NAD(P)H:plastoquinone, via FMN and iron-sulfur (Fe-S) centers, to quinones in the photosynthetic chain and possibly in a chloroplast respiratory chain. The immediate electron acceptor for the enzyme in this species is believed to be plastoquinone. Couples the redox reaction to proton translocation, and thus conserves the redox energy in a proton gradient. The chain is NAD(P)H-quinone oxidoreductase subunit 2 A, chloroplastic from Saccharum officinarum (Sugarcane).